Here is a 189-residue protein sequence, read N- to C-terminus: Protein OXIDATIVE STRESS 3 LIKE 2 (189 aa).

2 disordered regions span residues Ser-22 to Asn-49 and Ala-128 to Leu-147. Over residues Asn-33–Ile-44 the composition is skewed to acidic residues.

It is found in the nucleus. The chain is Protein OXIDATIVE STRESS 3 LIKE 2 from Arabidopsis thaliana (Mouse-ear cress).